Reading from the N-terminus, the 307-residue chain is MNDTSRTTAVCEPGCSNGVTRRAQAPVGTSFKHEHLSSILADGLKDGFFEVHAENYMGAGGPPHRALAAIREAYPISLHGVCMSIGGPGALDLTHLSRFRDLVTRYEPVLVSEHLAWSSHGGTFFNDLLPLPYTKATLEHVCEHISQVQDAIKRPLLLENPSTYVAFASSTLSETEFIRAVVQHTGCGLLLDLNNVFVSATNHGFSAEAYLEGLPLEQVGEIHLAGHSEQRDDENELLLIDSHDCAISDPVWHLYRDLVARIGPTPTLIEWDSKLPAWPVLRAQALSARHITAEEDVSLAEEVSHAG.

It belongs to the UPF0276 family.

The chain is UPF0276 protein Bphyt_5128 from Paraburkholderia phytofirmans (strain DSM 17436 / LMG 22146 / PsJN) (Burkholderia phytofirmans).